Here is a 165-residue protein sequence, read N- to C-terminus: Anterior gradient protein 3 (165 aa).

The N-terminal stretch at 1–20 is a signal peptide; sequence MLHSALALCLLLITVSSNLA. Positions 162–165 match the Prevents secretion from ER motif; sequence QSEL.

It belongs to the AGR family. Interacts with LYPD3 and DAG1 (alphaDAG1). Expressed in the ciliated cells of the airway epithelium. Not detected in the mucous cells.

It localises to the endoplasmic reticulum. Its subcellular location is the cytoplasm. Its function is as follows. Required for calcium-mediated regulation of ciliary beat frequency and mucociliary clearance in the airway. Might be involved in the regulation of intracellular calcium in tracheal epithelial cells. In Mus musculus (Mouse), this protein is Anterior gradient protein 3.